An 897-amino-acid polypeptide reads, in one-letter code: Ubiquitin carboxyl-terminal hydrolase 33 (897 aa).

The UBP-type zinc-finger motif lies at 7–110 (NDCPHLECVG…KQLPNAAKAV (104 aa)). Positions 9, 11, 31, 34, 44, 49, 54, 61, 65, 71, 84, and 87 each coordinate Zn(2+). The USP domain maps to 156–670 (TGLKNIGNTC…EAYVLFYKKS (515 aa)). C165 acts as the Nucleophile in catalysis. Disordered stretches follow at residues 261-308 (LIPE…GPRV) and 343-420 (GSHG…HKKV). Polar residues predominate over residues 287 to 297 (DDFQSCESCGS). 2 stretches are compositionally biased toward basic and acidic residues: residues 299-308 (DRADNEGPRV) and 344-353 (SHGDLDKDVD). The span at 355–396 (TSDSRPIISSQGAIKAQGRTSDSEIQVSSTVRPQSPTGNEGI) shows a compositional bias: polar residues. The segment covering 398-411 (SRLSSSPPKSSAWP) has biased composition (low complexity). The Proton acceptor role is filled by H628. 2 consecutive DUSP domains span residues 672–765 (DETQ…LYVC) and 773–876 (EKLE…RPSV). Residues 875 to 884 (SVSHQESETS) are compositionally biased toward low complexity. The tract at residues 875-897 (SVSHQESETSQSEEKIEVETRTV) is disordered. Basic and acidic residues predominate over residues 886 to 897 (SEEKIEVETRTV).

This sequence belongs to the peptidase C19 family. USP20/USP33 subfamily.

The protein resides in the cytoplasm. Its subcellular location is the perinuclear region. It is found in the cytoskeleton. It localises to the microtubule organizing center. The protein localises to the centrosome. The catalysed reaction is Thiol-dependent hydrolysis of ester, thioester, amide, peptide and isopeptide bonds formed by the C-terminal Gly of ubiquitin (a 76-residue protein attached to proteins as an intracellular targeting signal).. Its function is as follows. Deubiquitinating enzyme involved in various processes such as centrosome duplication, cellular migration and beta-2 adrenergic receptor/ADRB2 recycling. Involved in regulation of centrosome duplication by mediating deubiquitination of ccp110 in S and G2/M phase, leading to stabilize ccp110 during the period which centrioles duplicate and elongate. Involved in cell migration via its interaction with intracellular domain of robo1, leading to regulate the Slit signaling. Plays a role in commissural axon guidance cross the ventral midline of the neural tube in a Slit-dependent manner, possibly by mediating the deubiquitination of robo1. Acts as a regulator of G-protein coupled receptor (GPCR) signaling by mediating the deubiquitination of beta-arrestins (arrb1 and arrb2) and beta-2 adrenergic receptor (adrb2). Deubiquitinates dio2, thereby regulating thyroid hormone regulation. Mediates deubiquitination of both 'Lys-48'- and 'Lys-63'-linked polyubiquitin chains. In Danio rerio (Zebrafish), this protein is Ubiquitin carboxyl-terminal hydrolase 33 (usp33).